A 294-amino-acid polypeptide reads, in one-letter code: 4-diphosphocytidyl-2-C-methyl-D-erythritol kinase (294 aa).

Lysine 11 is a catalytic residue. 93 to 103 (PFGAGLGGGSS) is a binding site for ATP. Aspartate 135 is a catalytic residue.

The protein belongs to the GHMP kinase family. IspE subfamily.

The enzyme catalyses 4-CDP-2-C-methyl-D-erythritol + ATP = 4-CDP-2-C-methyl-D-erythritol 2-phosphate + ADP + H(+). Its pathway is isoprenoid biosynthesis; isopentenyl diphosphate biosynthesis via DXP pathway; isopentenyl diphosphate from 1-deoxy-D-xylulose 5-phosphate: step 3/6. Catalyzes the phosphorylation of the position 2 hydroxy group of 4-diphosphocytidyl-2C-methyl-D-erythritol. The sequence is that of 4-diphosphocytidyl-2-C-methyl-D-erythritol kinase from Chlorobium phaeobacteroides (strain DSM 266 / SMG 266 / 2430).